The chain runs to 357 residues: Protein BIG GRAIN 1-like A (357 aa).

Disordered regions lie at residues 1–146 (MEIT…KELG) and 208–233 (SSTCSSASSFSRSCLSKTPSSSGKSK). Residues 75-87 (DFERSRRKTDFLR) show a composition bias toward basic and acidic residues. Composition is skewed to low complexity over residues 88-104 (HSNSSSSDSSGFSSSES) and 112-127 (KSSASPPSSSRQQPKP). The segment covering 129–139 (RTSSVDHSSAV) has biased composition (polar residues). Positions 208-223 (SSTCSSASSFSRSCLS) are enriched in low complexity.

It belongs to the BIG GRAIN 1 (BG1) plant protein family.

The protein localises to the cell membrane. In terms of biological role, involved in auxin transport. Regulator of the auxin signaling pathway. This Arabidopsis thaliana (Mouse-ear cress) protein is Protein BIG GRAIN 1-like A.